A 418-amino-acid polypeptide reads, in one-letter code: Gamma-glutamyl phosphate reductase (418 aa).

The protein belongs to the gamma-glutamyl phosphate reductase family.

It is found in the cytoplasm. It catalyses the reaction L-glutamate 5-semialdehyde + phosphate + NADP(+) = L-glutamyl 5-phosphate + NADPH + H(+). It functions in the pathway amino-acid biosynthesis; L-proline biosynthesis; L-glutamate 5-semialdehyde from L-glutamate: step 2/2. Functionally, catalyzes the NADPH-dependent reduction of L-glutamate 5-phosphate into L-glutamate 5-semialdehyde and phosphate. The product spontaneously undergoes cyclization to form 1-pyrroline-5-carboxylate. This Geobacter metallireducens (strain ATCC 53774 / DSM 7210 / GS-15) protein is Gamma-glutamyl phosphate reductase.